Reading from the N-terminus, the 1403-residue chain is Perilipin-4 (1403 aa).

Positions 1–21 are disordered; the sequence is MSASGDGTRVPPKSKGKTLSS. 2 positions are modified to phosphoserine: S25 and S31. The interval 33 to 70 is disordered; sequence RNLVSHTHSSTSTKDLQTATDPSGTPAPSSKVSTNSQM. 29 consecutive repeat copies span residues 104–136, 137–169, 170–202, 203–235, 236–268, 269–301, 302–334, 335–367, 368–400, 401–433, 434–466, 467–499, 500–532, 533–565, 566–598, 599–631, 632–664, 665–697, 698–730, 731–763, 764–796, 797–829, 830–862, 863–895, 896–928, 929–961, 962–994, 995–1027, and 1028–1060. The segment at 104 to 1060 is 29 X 33 AA approximate tandem repeat; it reads GVFGIMDAAK…VTSAMNMAKG (957 aa). The residue at position 1281 (S1281) is a Phosphoserine. T1287 carries the phosphothreonine modification.

It belongs to the perilipin family. Specifically expressed in white adipose tissue and also weakly detected in heart and skeletal muscle (at protein level).

It localises to the cell membrane. It is found in the cytoplasm. The protein resides in the lipid droplet. In terms of biological role, may play a role in triacylglycerol packaging into adipocytes. May function as a coat protein involved in the biogenesis of lipid droplets. This is Perilipin-4 (Plin4) from Mus musculus (Mouse).